Consider the following 37-residue polypeptide: Cytochrome b6-f complex subunit 5 (37 aa).

A helical transmembrane segment spans residues 5–25 (LLSGIVLGMITVSALGLFVAA).

It belongs to the PetG family. As to quaternary structure, the 4 large subunits of the cytochrome b6-f complex are cytochrome b6, subunit IV (17 kDa polypeptide, PetD), cytochrome f and the Rieske protein, while the 4 small subunits are PetG, PetL, PetM and PetN. The complex functions as a dimer.

Its subcellular location is the plastid. The protein localises to the chloroplast thylakoid membrane. Functionally, component of the cytochrome b6-f complex, which mediates electron transfer between photosystem II (PSII) and photosystem I (PSI), cyclic electron flow around PSI, and state transitions. PetG is required for either the stability or assembly of the cytochrome b6-f complex. This Trieres chinensis (Marine centric diatom) protein is Cytochrome b6-f complex subunit 5.